We begin with the raw amino-acid sequence, 242 residues long: Aliphatic sulfonates import ATP-binding protein SsuB 1 (242 aa).

Positions 11-227 (VAVRRLSRAF…RPSHPDFEDL (217 aa)) constitute an ABC transporter domain. 43 to 50 (GESGSGKT) is a binding site for ATP.

The protein belongs to the ABC transporter superfamily. Aliphatic sulfonates importer (TC 3.A.1.17.2) family. As to quaternary structure, the complex is composed of two ATP-binding proteins (SsuB), two transmembrane proteins (SsuC) and a solute-binding protein (SsuA).

It is found in the cell inner membrane. The enzyme catalyses ATP + H2O + aliphatic sulfonate-[sulfonate-binding protein]Side 1 = ADP + phosphate + aliphatic sulfonateSide 2 + [sulfonate-binding protein]Side 1.. Its function is as follows. Part of the ABC transporter complex SsuABC involved in aliphatic sulfonates import. Responsible for energy coupling to the transport system. This is Aliphatic sulfonates import ATP-binding protein SsuB 1 from Paracoccus denitrificans (strain Pd 1222).